The following is a 369-amino-acid chain: CLIP domain-containing serine protease HP8 (369 aa).

Positions 1 to 24 (MKTPFEKIRIISCILVIVSTNVVG) are cleaved as a signal peptide. A propeptide spanning residues 25-81 (QKCNGGANCIPLEECTDLFQQLKQGNSPQLTRLLRGLHCGFEDLNSPKICCPPEFLA) is cleaved from the precursor. The Clip domain occupies 26 to 75 (KCNGGANCIPLEECTDLFQQLKQGNSPQLTRLLRGLHCGFEDLNSPKICC). 8 disulfides stabilise this stretch: Cys27/Cys74, Cys33/Cys63, Cys39/Cys75, Cys105/Cys239, Cys142/Cys158, Cys186/Cys191, Cys286/Cys303, and Cys313/Cys344. The 256-residue stretch at 113–368 (IFGGIQTEID…FMDWILSKLE (256 aa)) folds into the Peptidase S1 domain. His157 serves as the catalytic Charge relay system. Ca(2+) contacts are provided by Glu177, Asn179, Thr182, and Asp185. Asn179 carries N-linked (GlcNAc...) asparagine glycosylation. Asp219 serves as the catalytic Charge relay system. Ser317 functions as the Charge relay system in the catalytic mechanism.

This sequence belongs to the peptidase S1 family. CLIP subfamily. As to quaternary structure, in the active form, heterodimer of a light chain and a heavy chain; disulfide-linked. In terms of processing, proteolytically cleaved for activation. Cleavage produces a light chain and a catalytic heavy chain which remains covalently associated probably through an interchain disulfide bond. As to expression, in larvae, expressed in the fat body and hemocytes.

Its subcellular location is the secreted. The protein resides in the cytoplasm. Its activity is regulated as follows. Inhibited by (p-amidinophenyl) methanesulfonyl fluoride, p-nitrophenyl-p'-guanidinobenzoate, D-phenylalanyl-L-prolyl-L-arginyl chloromethane, leupeptin, antipain and to a lesser extent by antithrombin III. In terms of biological role, endopeptidase with selective post-Arg cleavage site. Functions in the innate immune response to fungal and Gram-positive bacterial infections. Upon pathogen infection promotes nodulation; a cellular defense response in which hemocytes surround and isolate invading pathogens forming aggregates called nodules. Involved in activating nodule formation in response to infection with M.luteus, E.coli or S.cerevisiae. Able to bind the microbes M.luteus, E.coli or S.cerevisiae. According to another report, does not bind microorganisms. The polypeptide is CLIP domain-containing serine protease HP8 (Bombyx mori (Silk moth)).